The primary structure comprises 633 residues: Shootin-1 (633 aa).

Met1 carries the post-translational modification N-acetylmethionine. Ser3 and Ser4 each carry phosphoserine. A coiled-coil region spans residues 7–353; it reads EKQLQLITSL…RVNQSENSVP (347 aa). 2 positions are modified to phosphoserine; by PAK1: Ser101 and Ser249. The interval 343–508 is disordered; that stretch reads KRVNQSENSV…LATSESKSMP (166 aa). Residues 352–369 are compositionally biased toward pro residues; that stretch reads VPPPPPPPPPLPPPPPNP. Ser375 is modified (phosphoserine). Residues 403-418 are compositionally biased toward basic and acidic residues; sequence TDLKRQAVEEMMDRIK. A compositionally biased stretch (polar residues) spans 456 to 465; sequence LNKSTSSRSL. Residue Ser473 is modified to Phosphoserine. A Phosphothreonine modification is found at Thr487. Positions 490 to 505 are enriched in polar residues; sequence ADSSSPTGILATSESK. Ser494 carries the post-translational modification Phosphoserine. Thr496 carries the phosphothreonine modification. A phosphoserine mark is found at Ser506 and Ser515. Residues 525–633 are disordered; that stretch reads TLEAEFNNPC…KTGETDSSNC (109 aa). Thr537 bears the Phosphothreonine mark. The span at 550–559 shows a compositional bias: polar residues; the sequence is CTNSKVTFQP. Residues 590 to 621 show a composition bias toward basic and acidic residues; sequence PQTKDQAAEKDPTQCKEEERGETQPEFKEDSS.

This sequence belongs to the shootin family. As to quaternary structure, interacts with PFN2. Interacts (via N-terminus) with KIF20B; this interaction is direct and promotes the association of SHTN1 to microtubules in primary neurons. Associates with microtubule. Interacts with L1CAM; this interaction occurs in axonal growth cones. Interacts with actin filament retrograde flow; this interaction is enhanced in a netrin-1- and PAK1-dependent manner and promotes F-actin-substrate coupling and concomitant formation of traction forces at axonal growth cones. Interacts with RUFY3. Phosphorylated on Ser-101 and Ser-249 by PAK1 through a CDC42- and RAC1-dependent signaling pathway, which enhances its association with F-actin retrograde flow in filopodia and lamellipodia of axonal growth cones. Phosphorylation on Ser-101 and Ser-249 is increased by netrin-1. In terms of tissue distribution, brain-specific (at protein level). Expressed in hippocampal neurons.

The protein resides in the perikaryon. Its subcellular location is the cell projection. It is found in the axon. It localises to the growth cone. The protein localises to the cytoplasm. The protein resides in the cytoskeleton. Its subcellular location is the filopodium. It is found in the lamellipodium. In terms of biological role, involved in the generation of internal asymmetric signals required for neuronal polarization and neurite outgrowth. Mediates netrin-1-induced F-actin-substrate coupling or 'clutch engagement' within the axon growth cone through activation of CDC42, RAC1 and PAK1-dependent signaling pathway, thereby converting the F-actin retrograde flow into traction forces, concomitantly with filopodium extension and axon outgrowth. Plays a role in cytoskeletal organization by regulating the subcellular localization of phosphoinositide 3-kinase (PI3K) activity at the axonal growth cone. Also plays a role in regenerative neurite outgrowth. In the developing cortex, cooperates with KIF20B to promote both the transition from the multipolar to the bipolar stage and the radial migration of cortical neurons from the ventricular zone toward the superficial layer of the neocortex. Involved in the accumulation of phosphatidylinositol 3,4,5-trisphosphate (PIP3) in the growth cone of primary hippocampal neurons. The sequence is that of Shootin-1 from Rattus norvegicus (Rat).